Here is a 314-residue protein sequence, read N- to C-terminus: MSILRDSGRHYEWQYLDLMRRIWEHGDERVDRTGVGTRSVFGAELRFDLSDGRMPLLTTKRVYWKTATREFLWFLTGNTNIRPLCAQGVEIWTDWPLDRYRKETGDDISRKDFSARIVADEAFALRWGDLGPVYGKQWVDWPVFEPVGDGLFRRREAGVNQVADVVDSLRHNPGSRRHIIEGWNVAEIDRMALPPCHKTYQFHVSGNRLNGLLYQRSCDVALGLPFNLWGAALLVRLLAQQCDLQPGELVWMGGDTHLYLNHADLVEAQLSREPEGDPRLAILRRPDSIFGYRIEDFEVTGYAPQGHLSAPVAV.

DUMP contacts are provided by residues arginine 32 and 176-177; that span reads RR. Residue cysteine 196 is the Nucleophile of the active site. Residues 216–219, asparagine 227, and 257–259 contribute to the dUMP site; these read RSCD and HLY. (6R)-5,10-methylene-5,6,7,8-tetrahydrofolate is bound at residue aspartate 219. A (6R)-5,10-methylene-5,6,7,8-tetrahydrofolate-binding site is contributed by alanine 313.

Belongs to the thymidylate synthase family. Bacterial-type ThyA subfamily. As to quaternary structure, homodimer.

It is found in the cytoplasm. The enzyme catalyses dUMP + (6R)-5,10-methylene-5,6,7,8-tetrahydrofolate = 7,8-dihydrofolate + dTMP. The protein operates within pyrimidine metabolism; dTTP biosynthesis. In terms of biological role, catalyzes the reductive methylation of 2'-deoxyuridine-5'-monophosphate (dUMP) to 2'-deoxythymidine-5'-monophosphate (dTMP) while utilizing 5,10-methylenetetrahydrofolate (mTHF) as the methyl donor and reductant in the reaction, yielding dihydrofolate (DHF) as a by-product. This enzymatic reaction provides an intracellular de novo source of dTMP, an essential precursor for DNA biosynthesis. The chain is Thymidylate synthase from Novosphingobium aromaticivorans (strain ATCC 700278 / DSM 12444 / CCUG 56034 / CIP 105152 / NBRC 16084 / F199).